The primary structure comprises 245 residues: Ribonuclease PH (245 aa).

Residues Arg86 and 124–126 (GTR) each bind phosphate.

Belongs to the RNase PH family. As to quaternary structure, homohexameric ring arranged as a trimer of dimers.

It catalyses the reaction tRNA(n+1) + phosphate = tRNA(n) + a ribonucleoside 5'-diphosphate. In terms of biological role, phosphorolytic 3'-5' exoribonuclease that plays an important role in tRNA 3'-end maturation. Removes nucleotide residues following the 3'-CCA terminus of tRNAs; can also add nucleotides to the ends of RNA molecules by using nucleoside diphosphates as substrates, but this may not be physiologically important. Probably plays a role in initiation of 16S rRNA degradation (leading to ribosome degradation) during starvation. In Bacillus cereus (strain ATCC 10987 / NRS 248), this protein is Ribonuclease PH.